Reading from the N-terminus, the 148-residue chain is Large ribosomal subunit protein uL16 (148 aa).

It belongs to the universal ribosomal protein uL16 family. As to quaternary structure, part of the 50S ribosomal subunit.

Binds 23S rRNA and is also seen to make contacts with the A and possibly P site tRNAs. This is Large ribosomal subunit protein uL16 from Gloeobacter violaceus (strain ATCC 29082 / PCC 7421).